Consider the following 90-residue polypeptide: MPHGHLRQALSPTSWTCEGLLLLLGLLVLFFHHHNQSAVERRRRVSFVEADRLPHESGWYSSDDDGDRDGDEETGESHNRNSVGLSAVFS.

A helical membrane pass occupies residues 15–34; the sequence is WTCEGLLLLLGLLVLFFHHH. The interval 55-90 is disordered; sequence HESGWYSSDDDGDRDGDEETGESHNRNSVGLSAVFS. Residues 62–74 show a composition bias toward acidic residues; the sequence is SDDDGDRDGDEET. Polar residues predominate over residues 80–90; sequence RNSVGLSAVFS.

The protein resides in the host membrane. The polypeptide is Protein RL8A (RL8A) (Homo sapiens (Human)).